A 424-amino-acid chain; its full sequence is Phosphomethylpyrimidine synthase 2 (424 aa).

Residues asparagine 65, methionine 94, tyrosine 123, histidine 162, serine 184–glycine 186, aspartate 225–arginine 228, and glutamate 264 each bind substrate. Residue histidine 268 participates in Zn(2+) binding. A substrate-binding site is contributed by tyrosine 291. A Zn(2+)-binding site is contributed by histidine 332. 3 residues coordinate [4Fe-4S] cluster: cysteine 408, cysteine 411, and cysteine 415.

Belongs to the ThiC family. [4Fe-4S] cluster is required as a cofactor.

The catalysed reaction is 5-amino-1-(5-phospho-beta-D-ribosyl)imidazole + S-adenosyl-L-methionine = 4-amino-2-methyl-5-(phosphooxymethyl)pyrimidine + CO + 5'-deoxyadenosine + formate + L-methionine + 3 H(+). It functions in the pathway cofactor biosynthesis; thiamine diphosphate biosynthesis. In terms of biological role, catalyzes the synthesis of the hydroxymethylpyrimidine phosphate (HMP-P) moiety of thiamine from aminoimidazole ribotide (AIR) in a radical S-adenosyl-L-methionine (SAM)-dependent reaction. This chain is Phosphomethylpyrimidine synthase 2, found in Methanothermobacter thermautotrophicus (strain ATCC 29096 / DSM 1053 / JCM 10044 / NBRC 100330 / Delta H) (Methanobacterium thermoautotrophicum).